We begin with the raw amino-acid sequence, 333 residues long: Tetraacyldisaccharide 4'-kinase (333 aa).

55-62 (SVGGNGKT) is a binding site for ATP.

It belongs to the LpxK family.

The catalysed reaction is a lipid A disaccharide + ATP = a lipid IVA + ADP + H(+). It functions in the pathway glycolipid biosynthesis; lipid IV(A) biosynthesis; lipid IV(A) from (3R)-3-hydroxytetradecanoyl-[acyl-carrier-protein] and UDP-N-acetyl-alpha-D-glucosamine: step 6/6. Its function is as follows. Transfers the gamma-phosphate of ATP to the 4'-position of a tetraacyldisaccharide 1-phosphate intermediate (termed DS-1-P) to form tetraacyldisaccharide 1,4'-bis-phosphate (lipid IVA). The protein is Tetraacyldisaccharide 4'-kinase of Aeromonas hydrophila subsp. hydrophila (strain ATCC 7966 / DSM 30187 / BCRC 13018 / CCUG 14551 / JCM 1027 / KCTC 2358 / NCIMB 9240 / NCTC 8049).